Consider the following 361-residue polypeptide: Peptide chain release factor 1 (361 aa).

Q237 bears the N5-methylglutamine mark. The segment at 286–306 is disordered; that stretch reads AKQDQEQAAKRKSLVGSGDRS.

Belongs to the prokaryotic/mitochondrial release factor family. Methylated by PrmC. Methylation increases the termination efficiency of RF1.

The protein localises to the cytoplasm. In terms of biological role, peptide chain release factor 1 directs the termination of translation in response to the peptide chain termination codons UAG and UAA. The protein is Peptide chain release factor 1 of Coxiella burnetii (strain CbuG_Q212) (Coxiella burnetii (strain Q212)).